The sequence spans 629 residues: UvrABC system protein C (629 aa).

Residues T26–V105 form the GIY-YIG domain. Residues S219 to Y254 form the UVR domain.

This sequence belongs to the UvrC family. In terms of assembly, interacts with UvrB in an incision complex.

It is found in the cytoplasm. In terms of biological role, the UvrABC repair system catalyzes the recognition and processing of DNA lesions. UvrC both incises the 5' and 3' sides of the lesion. The N-terminal half is responsible for the 3' incision and the C-terminal half is responsible for the 5' incision. The protein is UvrABC system protein C of Chlorobium chlorochromatii (strain CaD3).